The primary structure comprises 117 residues: Large ribosomal subunit protein bL20 (117 aa).

Belongs to the bacterial ribosomal protein bL20 family.

In terms of biological role, binds directly to 23S ribosomal RNA and is necessary for the in vitro assembly process of the 50S ribosomal subunit. It is not involved in the protein synthesizing functions of that subunit. In Mesomycoplasma hyopneumoniae (strain 7448) (Mycoplasma hyopneumoniae), this protein is Large ribosomal subunit protein bL20.